Here is a 194-residue protein sequence, read N- to C-terminus: HTH-type transcriptional regulator BetI (194 aa).

The region spanning 8 to 68 is the HTH tetR-type domain; that stretch reads PLRRRELIDA…ATMRHLLREL (61 aa). A DNA-binding region (H-T-H motif) is located at residues 31-50; that stretch reads TVAQIAHEAGVSPALAHHYF.

The protein operates within amine and polyamine biosynthesis; betaine biosynthesis via choline pathway [regulation]. In terms of biological role, repressor involved in the biosynthesis of the osmoprotectant glycine betaine. It represses transcription of the choline transporter BetT and the genes of BetAB involved in the synthesis of glycine betaine. In Brucella anthropi (strain ATCC 49188 / DSM 6882 / CCUG 24695 / JCM 21032 / LMG 3331 / NBRC 15819 / NCTC 12168 / Alc 37) (Ochrobactrum anthropi), this protein is HTH-type transcriptional regulator BetI.